A 173-amino-acid polypeptide reads, in one-letter code: Putative metal-dependent hydrolase OB0413 (173 aa).

The Zn(2+) site is built by histidine 64, histidine 155, and histidine 159.

It belongs to the metal hydrolase YfiT family. Homodimer. The cofactor is Zn(2+).

The protein resides in the cytoplasm. Its function is as follows. Possible metal-dependent hydrolase. In Oceanobacillus iheyensis (strain DSM 14371 / CIP 107618 / JCM 11309 / KCTC 3954 / HTE831), this protein is Putative metal-dependent hydrolase OB0413.